Consider the following 429-residue polypeptide: Argininosuccinate lyase (429 aa).

Belongs to the lyase 1 family. Argininosuccinate lyase subfamily.

The protein resides in the cytoplasm. It carries out the reaction 2-(N(omega)-L-arginino)succinate = fumarate + L-arginine. Its pathway is amino-acid biosynthesis; L-arginine biosynthesis; L-arginine from L-ornithine and carbamoyl phosphate: step 3/3. The chain is Argininosuccinate lyase from Pyrobaculum arsenaticum (strain DSM 13514 / JCM 11321 / PZ6).